Reading from the N-terminus, the 300-residue chain is UDP-3-O-acyl-N-acetylglucosamine deacetylase (300 aa).

His78, His237, and Asp241 together coordinate Zn(2+). The Proton donor role is filled by His264.

It belongs to the LpxC family. Requires Zn(2+) as cofactor.

The catalysed reaction is a UDP-3-O-[(3R)-3-hydroxyacyl]-N-acetyl-alpha-D-glucosamine + H2O = a UDP-3-O-[(3R)-3-hydroxyacyl]-alpha-D-glucosamine + acetate. The protein operates within glycolipid biosynthesis; lipid IV(A) biosynthesis; lipid IV(A) from (3R)-3-hydroxytetradecanoyl-[acyl-carrier-protein] and UDP-N-acetyl-alpha-D-glucosamine: step 2/6. Catalyzes the hydrolysis of UDP-3-O-myristoyl-N-acetylglucosamine to form UDP-3-O-myristoylglucosamine and acetate, the committed step in lipid A biosynthesis. This is UDP-3-O-acyl-N-acetylglucosamine deacetylase from Acinetobacter baumannii (strain ATCC 17978 / DSM 105126 / CIP 53.77 / LMG 1025 / NCDC KC755 / 5377).